Consider the following 532-residue polypeptide: Phosphoenolpyruvate carboxykinase (ATP) (532 aa).

Substrate is bound by residues Arg60, Tyr194, and Lys200. ATP-binding positions include Lys200, His219, and 237–245 (GLSGTGKTT). Positions 200 and 219 each coordinate Mn(2+). Residue Asp258 coordinates Mn(2+). ATP-binding residues include Glu286, Arg324, and Thr449. Arg324 is a substrate binding site.

This sequence belongs to the phosphoenolpyruvate carboxykinase (ATP) family. The cofactor is Mn(2+).

The protein resides in the cytoplasm. It catalyses the reaction oxaloacetate + ATP = phosphoenolpyruvate + ADP + CO2. It participates in carbohydrate biosynthesis; gluconeogenesis. Involved in the gluconeogenesis. Catalyzes the conversion of oxaloacetate (OAA) to phosphoenolpyruvate (PEP) through direct phosphoryl transfer between the nucleoside triphosphate and OAA. The sequence is that of Phosphoenolpyruvate carboxykinase (ATP) from Ruegeria pomeroyi (strain ATCC 700808 / DSM 15171 / DSS-3) (Silicibacter pomeroyi).